The primary structure comprises 816 residues: Pentatricopeptide repeat-containing protein At5g12100, mitochondrial (816 aa).

A mitochondrion-targeting transit peptide spans 1–39 (MVTRLRLVSRSSRYATVKFTDSVSACSCRRLFSASTDPE). Residues 34-57 (ASTDPEPESQPEQAPPTNPVTGDE) form a disordered region. 20 PPR repeats span residues 108–142 (HDFSYLLLSVLLNESKMISEAADLFFALRNEGIYP), 143–177 (SSDSLTLLLDHLVKTKQFRVTINVFLNILESDFRP), 178–212 (SKFMYGKAIQAAVKLSDVGKGLELFNRMKHDRIYP), 213–247 (SVFIYNVLIDGLCKGKRMNDAEQLFDEMLARRLLP), 248–282 (SLITYNTLIDGYCKAGNPEKSFKVRERMKADHIEP), 283–317 (SLITFNTLLKGLFKAGMVEDAENVLKEMKDLGFVP), 318–352 (DAFTFSILFDGYSSNEKAEAALGVYETAVDSGVKM), 353–387 (NAYTCSILLNALCKEGKIEKAEEILGREMAKGLVP), 388–422 (NEVIYNTMIDGYCRKGDLVGARMKIEAMEKQGMKP), 423–457 (DHLAYNCLIRRFCELGEMENAEKEVNKMKLKGVSP), 458–492 (SVETYNILIGGYGRKYEFDKCFDILKEMEDNGTMP), 493–527 (NVVSYGTLINCLCKGSKLLEAQIVKRDMEDRGVSP), 528–562 (KVRIYNMLIDGCCSKGKIEDAFRFSKEMLKKGIEL), 563–597 (NLVTYNTLIDGLSMTGKLSEAEDLLLEISRKGLKP), 598–632 (DVFTYNSLISGYGFAGNVQRCIALYEEMKRSGIKP), 633–662 (TLKTYHLLISLCTKEGIELTERLFGEMSLK), 664–698 (DLLVYNGVLHCYAVHGDMEKAFNLQKQMIEKSIGL), 699–733 (DKTTYNSLILGQLKVGKLCEVRSLIDEMNAREMEP), 734–768 (EADTYNIIVKGHCEVKDYMSAYVWYREMQEKGFLL), and 769–803 (DVCIGNELVSGLKEEWRSKEAEIVISEMNGRMLGD).

Belongs to the PPR family. P subfamily.

The protein localises to the mitochondrion. The protein is Pentatricopeptide repeat-containing protein At5g12100, mitochondrial of Arabidopsis thaliana (Mouse-ear cress).